The chain runs to 331 residues: Biotin synthase (331 aa).

The Radical SAM core domain maps to 46 to 275 (YYGKKVKLNM…TKEIRISGGR (230 aa)). [4Fe-4S] cluster-binding residues include cysteine 64, cysteine 68, and cysteine 71. Residues cysteine 108, cysteine 140, cysteine 200, and arginine 270 each contribute to the [2Fe-2S] cluster site.

The protein belongs to the radical SAM superfamily. Biotin synthase family. Homodimer. It depends on [4Fe-4S] cluster as a cofactor. [2Fe-2S] cluster is required as a cofactor.

The enzyme catalyses (4R,5S)-dethiobiotin + (sulfur carrier)-SH + 2 reduced [2Fe-2S]-[ferredoxin] + 2 S-adenosyl-L-methionine = (sulfur carrier)-H + biotin + 2 5'-deoxyadenosine + 2 L-methionine + 2 oxidized [2Fe-2S]-[ferredoxin]. It participates in cofactor biosynthesis; biotin biosynthesis; biotin from 7,8-diaminononanoate: step 2/2. Its function is as follows. Catalyzes the conversion of dethiobiotin (DTB) to biotin by the insertion of a sulfur atom into dethiobiotin via a radical-based mechanism. The chain is Biotin synthase from Lysinibacillus sphaericus (strain C3-41).